The chain runs to 920 residues: Protein FAN (920 aa).

One can recognise a GRAM domain in the interval 176 to 247 (RLARTSFDKN…QDVRRIYKRR (72 aa)). The BEACH-type PH domain occupies 189–286 (SVSEKLHMEC…DRDDLYFYIA (98 aa)). The BEACH domain maps to 290–575 (EHHAAEHTAE…QLFVTPHPRR (286 aa)). WD repeat units lie at residues 631 to 661 (IHKE…KMFS), 673 to 703 (FSNM…YFYS), 715 to 743 (GHDD…KVWS), 764 to 794 (EHDV…NIWD), 806 to 836 (CHSG…NVID), and 887 to 917 (GHTG…MFWK).

In terms of biological role, couples the p55 TNF-receptor (TNF-R55 / TNFR1) to neutral sphingomyelinase (N-SMASE). Specifically binds to the N-smase activation domain of TNF-R55. May regulate ceramide production by N-SMASE. The chain is Protein FAN (Nsmaf) from Mus musculus (Mouse).